Here is a 372-residue protein sequence, read N- to C-terminus: Y-box-binding protein 3 (372 aa).

Positions 1 to 82 are disordered; it reads MSEAGEATTT…LATAAGSEDA (82 aa). Ser2 bears the N-acetylserine mark. Ser2 carries the phosphoserine modification. Over residues 7–28 the composition is skewed to low complexity; the sequence is ATTTTTTTLPQAPTEAAAAAPQ. Ser34 is modified (phosphoserine). Residues 35-79 show a composition bias toward low complexity; sequence PVGSGAPQAAAPAPAAHVAGNPGGDAAPAATGTAAAASLATAAGS. One can recognise a CSD domain in the interval 93–157; it reads GTVKWFNVRN…GEKGAEAANV (65 aa). 4 positions are modified to phosphoserine: Ser134, Ser201, Ser203, and Ser204. The segment at 181–372 is disordered; the sequence is YYGRRRGPPR…APPTQQSSAE (192 aa). The segment covering 222–238 has biased composition (basic residues); that stretch reads QLRRPQYRPQYRQRRFP. The residue at position 251 (Arg251) is an Omega-N-methylarginine. Positions 314–324 are enriched in polar residues; that stretch reads QQATSGPNQPS. Ser324 carries the phosphoserine modification. The residue at position 326 (Arg326) is an Omega-N-methylarginine. A compositionally biased stretch (basic residues) spans 327-340; sequence RGYRRPYNYRRRPR. Phosphoserine is present on residues Ser346, Ser369, and Ser370.

As to quaternary structure, found in a mRNP complex with YBX2. Interacts with RRP1B. As to expression, highly expressed in skeletal muscle and heart.

It is found in the cytoplasm. The protein resides in the nucleus. Functionally, binds to the GM-CSF promoter. Seems to act as a repressor. Also binds to full-length mRNA and to short RNA sequences containing the consensus site 5'-UCCAUCA-3'. May have a role in translation repression. This is Y-box-binding protein 3 (YBX3) from Homo sapiens (Human).